The sequence spans 741 residues: Polyribonucleotide nucleotidyltransferase (741 aa).

Residues Asp-489 and Asp-495 each contribute to the Mg(2+) site. The 60-residue stretch at 556–615 (PKIDSIQIPVDKIKVVIGKGGETIDKIIAETGVTIDIDEEGLVQIFSSDQDAIDRAKTII) folds into the KH domain. In terms of domain architecture, S1 motif spans 625 to 693 (GEVYTVPVVR…EKGRVDASIK (69 aa)). The interval 695–741 (LLPKPEKNEDGENGEEHRHCCCSHHKPDHHNESVEAPKKSDESETKE) is disordered. Composition is skewed to basic and acidic residues over residues 698–713 (KPEKNEDGENGEEHRH) and 723–741 (HHNESVEAPKKSDESETKE).

This sequence belongs to the polyribonucleotide nucleotidyltransferase family. The cofactor is Mg(2+).

It localises to the cytoplasm. The catalysed reaction is RNA(n+1) + phosphate = RNA(n) + a ribonucleoside 5'-diphosphate. Its function is as follows. Involved in mRNA degradation. Catalyzes the phosphorolysis of single-stranded polyribonucleotides processively in the 3'- to 5'-direction. The protein is Polyribonucleotide nucleotidyltransferase of Streptococcus thermophilus (strain CNRZ 1066).